The following is a 407-amino-acid chain: Phosphopentomutase (407 aa).

Mn(2+) is bound by residues aspartate 11, aspartate 305, histidine 310, aspartate 346, histidine 347, and histidine 358.

The protein belongs to the phosphopentomutase family. The cofactor is Mn(2+).

It localises to the cytoplasm. It catalyses the reaction 2-deoxy-alpha-D-ribose 1-phosphate = 2-deoxy-D-ribose 5-phosphate. The enzyme catalyses alpha-D-ribose 1-phosphate = D-ribose 5-phosphate. Its pathway is carbohydrate degradation; 2-deoxy-D-ribose 1-phosphate degradation; D-glyceraldehyde 3-phosphate and acetaldehyde from 2-deoxy-alpha-D-ribose 1-phosphate: step 1/2. Its function is as follows. Isomerase that catalyzes the conversion of deoxy-ribose 1-phosphate (dRib-1-P) and ribose 1-phosphate (Rib-1-P) to deoxy-ribose 5-phosphate (dRib-5-P) and ribose 5-phosphate (Rib-5-P), respectively. This is Phosphopentomutase from Legionella pneumophila (strain Paris).